We begin with the raw amino-acid sequence, 78 residues long: Beta sliding clamp (78 aa).

It belongs to the beta sliding clamp family. Forms a ring-shaped head-to-tail homodimer around DNA which binds and tethers DNA polymerases and other proteins to the DNA. The DNA replisome complex has a single clamp-loading complex (3 tau and 1 each of delta, delta', psi and chi subunits) which binds 3 Pol III cores (1 core on the leading strand and 2 on the lagging strand) each with a beta sliding clamp dimer. Additional proteins in the replisome are other copies of gamma, psi and chi, Ssb, DNA helicase and RNA primase.

It localises to the cytoplasm. Its function is as follows. Confers DNA tethering and processivity to DNA polymerases and other proteins. Acts as a clamp, forming a ring around DNA (a reaction catalyzed by the clamp-loading complex) which diffuses in an ATP-independent manner freely and bidirectionally along dsDNA. Initially characterized for its ability to contact the catalytic subunit of DNA polymerase III (Pol III), a complex, multichain enzyme responsible for most of the replicative synthesis in bacteria; Pol III exhibits 3'-5' exonuclease proofreading activity. The beta chain is required for initiation of replication as well as for processivity of DNA replication. This Serratia marcescens protein is Beta sliding clamp (dnaN).